Consider the following 353-residue polypeptide: Holliday junction branch migration complex subunit RuvB (353 aa).

The large ATPase domain (RuvB-L) stretch occupies residues 4–185 (ADRLITAAGG…FGIVQRLEFY (182 aa)). ATP-binding positions include Ile-24, Arg-25, Gly-66, Lys-69, Thr-70, Thr-71, 132–134 (EDF), Arg-175, Tyr-185, and Arg-222. Thr-70 contributes to the Mg(2+) binding site. Positions 186–256 (NIADLSTIVS…TADKALNLLD (71 aa)) are small ATPAse domain (RuvB-S). The head domain (RuvB-H) stretch occupies residues 259-353 (EHGFDHQDRR…DDVVDDPADL (95 aa)). DNA-binding residues include Arg-295, Arg-314, and Arg-319.

It belongs to the RuvB family. As to quaternary structure, homohexamer. Forms an RuvA(8)-RuvB(12)-Holliday junction (HJ) complex. HJ DNA is sandwiched between 2 RuvA tetramers; dsDNA enters through RuvA and exits via RuvB. An RuvB hexamer assembles on each DNA strand where it exits the tetramer. Each RuvB hexamer is contacted by two RuvA subunits (via domain III) on 2 adjacent RuvB subunits; this complex drives branch migration. In the full resolvosome a probable DNA-RuvA(4)-RuvB(12)-RuvC(2) complex forms which resolves the HJ.

It is found in the cytoplasm. It catalyses the reaction ATP + H2O = ADP + phosphate + H(+). In terms of biological role, the RuvA-RuvB-RuvC complex processes Holliday junction (HJ) DNA during genetic recombination and DNA repair, while the RuvA-RuvB complex plays an important role in the rescue of blocked DNA replication forks via replication fork reversal (RFR). RuvA specifically binds to HJ cruciform DNA, conferring on it an open structure. The RuvB hexamer acts as an ATP-dependent pump, pulling dsDNA into and through the RuvAB complex. RuvB forms 2 homohexamers on either side of HJ DNA bound by 1 or 2 RuvA tetramers; 4 subunits per hexamer contact DNA at a time. Coordinated motions by a converter formed by DNA-disengaged RuvB subunits stimulates ATP hydrolysis and nucleotide exchange. Immobilization of the converter enables RuvB to convert the ATP-contained energy into a lever motion, pulling 2 nucleotides of DNA out of the RuvA tetramer per ATP hydrolyzed, thus driving DNA branch migration. The RuvB motors rotate together with the DNA substrate, which together with the progressing nucleotide cycle form the mechanistic basis for DNA recombination by continuous HJ branch migration. Branch migration allows RuvC to scan DNA until it finds its consensus sequence, where it cleaves and resolves cruciform DNA. This chain is Holliday junction branch migration complex subunit RuvB, found in Pseudomonas savastanoi pv. phaseolicola (strain 1448A / Race 6) (Pseudomonas syringae pv. phaseolicola (strain 1448A / Race 6)).